Consider the following 515-residue polypeptide: Bifunctional purine biosynthesis protein PurH (515 aa).

Positions 1 to 145 constitute an MGS-like domain; the sequence is MTKRVLISVS…KNHASVTVVV (145 aa).

The protein belongs to the PurH family.

It carries out the reaction (6R)-10-formyltetrahydrofolate + 5-amino-1-(5-phospho-beta-D-ribosyl)imidazole-4-carboxamide = 5-formamido-1-(5-phospho-D-ribosyl)imidazole-4-carboxamide + (6S)-5,6,7,8-tetrahydrofolate. The catalysed reaction is IMP + H2O = 5-formamido-1-(5-phospho-D-ribosyl)imidazole-4-carboxamide. The protein operates within purine metabolism; IMP biosynthesis via de novo pathway; 5-formamido-1-(5-phospho-D-ribosyl)imidazole-4-carboxamide from 5-amino-1-(5-phospho-D-ribosyl)imidazole-4-carboxamide (10-formyl THF route): step 1/1. It functions in the pathway purine metabolism; IMP biosynthesis via de novo pathway; IMP from 5-formamido-1-(5-phospho-D-ribosyl)imidazole-4-carboxamide: step 1/1. This chain is Bifunctional purine biosynthesis protein PurH, found in Streptococcus pneumoniae (strain JJA).